Here is a 447-residue protein sequence, read N- to C-terminus: Phosphoglucosamine mutase (447 aa).

Serine 102 functions as the Phosphoserine intermediate in the catalytic mechanism. Mg(2+) contacts are provided by serine 102, aspartate 241, aspartate 243, and aspartate 245. A Phosphoserine modification is found at serine 102.

The protein belongs to the phosphohexose mutase family. It depends on Mg(2+) as a cofactor. Post-translationally, activated by phosphorylation.

It catalyses the reaction alpha-D-glucosamine 1-phosphate = D-glucosamine 6-phosphate. Its function is as follows. Catalyzes the conversion of glucosamine-6-phosphate to glucosamine-1-phosphate. The polypeptide is Phosphoglucosamine mutase (Pseudoalteromonas atlantica (strain T6c / ATCC BAA-1087)).